Here is a 188-residue protein sequence, read N- to C-terminus: Acireductone dioxygenase (188 aa).

Fe(2+)-binding residues include H97, H99, E103, and H141. H97, H99, E103, and H141 together coordinate Ni(2+).

It belongs to the acireductone dioxygenase (ARD) family. As to quaternary structure, monomer. Fe(2+) serves as cofactor. Requires Ni(2+) as cofactor.

It carries out the reaction 1,2-dihydroxy-5-(methylsulfanyl)pent-1-en-3-one + O2 = 3-(methylsulfanyl)propanoate + CO + formate + 2 H(+). It catalyses the reaction 1,2-dihydroxy-5-(methylsulfanyl)pent-1-en-3-one + O2 = 4-methylsulfanyl-2-oxobutanoate + formate + 2 H(+). It functions in the pathway amino-acid biosynthesis; L-methionine biosynthesis via salvage pathway; L-methionine from S-methyl-5-thio-alpha-D-ribose 1-phosphate: step 5/6. Its function is as follows. Catalyzes 2 different reactions between oxygen and the acireductone 1,2-dihydroxy-3-keto-5-methylthiopentene (DHK-MTPene) depending upon the metal bound in the active site. Fe-containing acireductone dioxygenase (Fe-ARD) produces formate and 2-keto-4-methylthiobutyrate (KMTB), the alpha-ketoacid precursor of methionine in the methionine recycle pathway. Ni-containing acireductone dioxygenase (Ni-ARD) produces methylthiopropionate, carbon monoxide and formate, and does not lie on the methionine recycle pathway. This chain is Acireductone dioxygenase, found in Xanthomonas oryzae pv. oryzae (strain MAFF 311018).